We begin with the raw amino-acid sequence, 212 residues long: Large ribosomal subunit protein uL4 (212 aa).

This sequence belongs to the universal ribosomal protein uL4 family. Part of the 50S ribosomal subunit.

Functionally, one of the primary rRNA binding proteins, this protein initially binds near the 5'-end of the 23S rRNA. It is important during the early stages of 50S assembly. It makes multiple contacts with different domains of the 23S rRNA in the assembled 50S subunit and ribosome. Forms part of the polypeptide exit tunnel. This chain is Large ribosomal subunit protein uL4, found in Caulobacter sp. (strain K31).